A 312-amino-acid polypeptide reads, in one-letter code: NAD(P)(+)--arginine ADP-ribosyltransferase 2 (312 aa).

Residues 1–20 (MELLALRWVLLAGTLLSTSA) form the signal peptide. A propeptide spanning residues 21-31 (ASSALQEGDLG) is cleaved from the precursor. 2 disulfide bridges follow: Cys51–Cys260 and Cys159–Cys208. The 186-residue stretch at 71–256 (YAYAVGWRKA…IYLRSKGKMS (186 aa)) folds into the TR mART core domain. NAD(+) is bound by residues Tyr108, Arg164, and Gln183. The active site involves Arg164. Ser186 is an active-site residue. NAD(+) is bound at residue Ser217. Residue Glu224 is part of the active site. Positions 267 to 312 (GGQWGRGHQEVGLGLSPGLALPVLPCSNCSCWGSGHRAGDPIPAAV) are excised as a propeptide.

The protein belongs to the Arg-specific ADP-ribosyltransferase family.

Its subcellular location is the secreted. It localises to the extracellular space. The enzyme catalyses L-arginyl-[protein] + NAD(+) = N(omega)-(ADP-D-ribosyl)-L-arginyl-[protein] + nicotinamide + H(+). This chain is NAD(P)(+)--arginine ADP-ribosyltransferase 2, found in Gallus gallus (Chicken).